The chain runs to 163 residues: Nucleotide-binding protein Pnap_1080 (163 aa).

It belongs to the YajQ family.

Its function is as follows. Nucleotide-binding protein. This chain is Nucleotide-binding protein Pnap_1080, found in Polaromonas naphthalenivorans (strain CJ2).